We begin with the raw amino-acid sequence, 340 residues long: Photosystem II assembly lipoprotein Ycf48 (340 aa).

The signal sequence occupies residues 1–26; the sequence is MTSVLGLLKPLKKAIAAIAVLVLCIG. Residue C27 is the site of N-palmitoyl cysteine attachment. C27 carries S-diacylglycerol cysteine lipidation.

Belongs to the Ycf48 family. In terms of assembly, part of early PSII assembly complexes which includes D1 (psbA) and PsbI; not found in mature PSII. Binds to the lumenal side of PSII complexes. Interacts with YidC.

The protein localises to the cellular thylakoid membrane. Functionally, a factor required for optimal assembly of photosystem II (PSII), acting in the early stages of PSII assembly. Also plays a role in replacement of photodamaged D1 (psbA). Assists YidC in synthesis of chlorophyll-binding proteins. The chain is Photosystem II assembly lipoprotein Ycf48 from Picosynechococcus sp. (strain ATCC 27264 / PCC 7002 / PR-6) (Agmenellum quadruplicatum).